A 347-amino-acid chain; its full sequence is GMP reductase (347 aa).

An NADP(+)-binding site is contributed by 108-131; it reads ADFEKTKQILDLNPALNFVCIDVA. K(+) contacts are provided by Gly181 and Gly183. The active-site Thioimidate intermediate is the Cys186. Residue 216-239 coordinates NADP(+); the sequence is IVSDGGCTTPGDVAKAFGGGADFV.

It belongs to the IMPDH/GMPR family. GuaC type 1 subfamily. As to quaternary structure, homotetramer.

It catalyses the reaction IMP + NH4(+) + NADP(+) = GMP + NADPH + 2 H(+). Catalyzes the irreversible NADPH-dependent deamination of GMP to IMP. It functions in the conversion of nucleobase, nucleoside and nucleotide derivatives of G to A nucleotides, and in maintaining the intracellular balance of A and G nucleotides. The protein is GMP reductase of Shigella flexneri serotype 5b (strain 8401).